The chain runs to 331 residues: HPr kinase/phosphorylase (331 aa).

Catalysis depends on residues His-153 and Lys-174. 168–175 (GKSGLGKS) lines the ATP pocket. Ser-175 is a binding site for Mg(2+). The Proton acceptor; for phosphorylation activity. Proton donor; for dephosphorylation activity role is filled by Asp-192. Residues 217–226 (MEIRGLGVVD) form an important for the catalytic mechanism of both phosphorylation and dephosphorylation region. Glu-218 lines the Mg(2+) pocket. The active site involves Arg-259. An important for the catalytic mechanism of dephosphorylation region spans residues 280-285 (PIFPGK).

The protein belongs to the HPrK/P family. As to quaternary structure, homohexamer. Mg(2+) is required as a cofactor.

The enzyme catalyses [HPr protein]-L-serine + ATP = [HPr protein]-O-phospho-L-serine + ADP + H(+). It carries out the reaction [HPr protein]-O-phospho-L-serine + phosphate + H(+) = [HPr protein]-L-serine + diphosphate. Functionally, catalyzes the ATP- as well as the pyrophosphate-dependent phosphorylation of a specific serine residue in HPr, a phosphocarrier protein of the phosphoenolpyruvate-dependent sugar phosphotransferase system (PTS). HprK/P also catalyzes the pyrophosphate-producing, inorganic phosphate-dependent dephosphorylation (phosphorolysis) of seryl-phosphorylated HPr (P-Ser-HPr). The sequence is that of HPr kinase/phosphorylase from Pelodictyon phaeoclathratiforme (strain DSM 5477 / BU-1).